The chain runs to 394 residues: NAD(P)H-quinone oxidoreductase subunit H (394 aa).

This sequence belongs to the complex I 49 kDa subunit family. In terms of assembly, NDH-1 can be composed of about 15 different subunits; different subcomplexes with different compositions have been identified which probably have different functions.

The protein localises to the cellular thylakoid membrane. It catalyses the reaction a plastoquinone + NADH + (n+1) H(+)(in) = a plastoquinol + NAD(+) + n H(+)(out). The enzyme catalyses a plastoquinone + NADPH + (n+1) H(+)(in) = a plastoquinol + NADP(+) + n H(+)(out). NDH-1 shuttles electrons from an unknown electron donor, via FMN and iron-sulfur (Fe-S) centers, to quinones in the respiratory and/or the photosynthetic chain. The immediate electron acceptor for the enzyme in this species is believed to be plastoquinone. Couples the redox reaction to proton translocation, and thus conserves the redox energy in a proton gradient. Cyanobacterial NDH-1 also plays a role in inorganic carbon-concentration. The chain is NAD(P)H-quinone oxidoreductase subunit H from Synechococcus sp. (strain CC9605).